We begin with the raw amino-acid sequence, 210 residues long: Mating-type-like protein ALPHA2, silenced copy at MTL3 (210 aa).

The segment at residues Ala-108–Tyr-170 is a DNA-binding region (homeobox; TALE-type).

Belongs to the TALE/M-ATYP homeobox family.

The protein resides in the nucleus. In terms of biological role, mating type proteins are sequence specific DNA-binding proteins that act as master switches in yeast differentiation by controlling gene expression in a cell type-specific fashion. In Candida glabrata (strain ATCC 2001 / BCRC 20586 / JCM 3761 / NBRC 0622 / NRRL Y-65 / CBS 138) (Yeast), this protein is Mating-type-like protein ALPHA2, silenced copy at MTL3 (MTL3alpha2).